Here is a 239-residue protein sequence, read N- to C-terminus: 1-(5-phosphoribosyl)-5-[(5-phosphoribosylamino)methylideneamino] imidazole-4-carboxamide isomerase (239 aa).

The active-site Proton acceptor is D8. The active-site Proton donor is D130.

Belongs to the HisA/HisF family.

It localises to the cytoplasm. The enzyme catalyses 1-(5-phospho-beta-D-ribosyl)-5-[(5-phospho-beta-D-ribosylamino)methylideneamino]imidazole-4-carboxamide = 5-[(5-phospho-1-deoxy-D-ribulos-1-ylimino)methylamino]-1-(5-phospho-beta-D-ribosyl)imidazole-4-carboxamide. Its pathway is amino-acid biosynthesis; L-histidine biosynthesis; L-histidine from 5-phospho-alpha-D-ribose 1-diphosphate: step 4/9. In Streptococcus thermophilus (strain ATCC BAA-491 / LMD-9), this protein is 1-(5-phosphoribosyl)-5-[(5-phosphoribosylamino)methylideneamino] imidazole-4-carboxamide isomerase.